We begin with the raw amino-acid sequence, 163 residues long: Superoxide dismutase [Mn] (163 aa).

Residues His-2, His-50, Asp-134, and His-138 each contribute to the Mn(2+) site.

Belongs to the iron/manganese superoxide dismutase family. The cofactor is Mn(2+).

The enzyme catalyses 2 superoxide + 2 H(+) = H2O2 + O2. Its function is as follows. Destroys superoxide anion radicals which are normally produced within the cells and which are toxic to biological systems. This chain is Superoxide dismutase [Mn] (sodA), found in Mycobacterium kansasii.